The sequence spans 309 residues: ADP-L-glycero-D-manno-heptose-6-epimerase (309 aa).

NADP(+) contacts are provided by residues 10 to 11 (MI), 31 to 32 (DN), Lys38, Lys53, 75 to 79 (EGACS), and Asn92. The active-site Proton acceptor is the Tyr139. NADP(+) is bound at residue Lys143. Position 168 (Asn168) interacts with substrate. NADP(+) is bound by residues Val169 and Lys177. Lys177 (proton acceptor) is an active-site residue. Residues Ser179, His186, 200-203 (FDGS), Arg208, and Tyr271 contribute to the substrate site.

Belongs to the NAD(P)-dependent epimerase/dehydratase family. HldD subfamily. As to quaternary structure, homopentamer. Requires NADP(+) as cofactor.

The enzyme catalyses ADP-D-glycero-beta-D-manno-heptose = ADP-L-glycero-beta-D-manno-heptose. Its pathway is nucleotide-sugar biosynthesis; ADP-L-glycero-beta-D-manno-heptose biosynthesis; ADP-L-glycero-beta-D-manno-heptose from D-glycero-beta-D-manno-heptose 7-phosphate: step 4/4. In terms of biological role, catalyzes the interconversion between ADP-D-glycero-beta-D-manno-heptose and ADP-L-glycero-beta-D-manno-heptose via an epimerization at carbon 6 of the heptose. The polypeptide is ADP-L-glycero-D-manno-heptose-6-epimerase (Serratia proteamaculans (strain 568)).